Reading from the N-terminus, the 156-residue chain is uncharacterized protein (156 aa).

This is an uncharacterized protein from Staphylococcus aureus (strain MW2).